Reading from the N-terminus, the 493-residue chain is Aspartyl/glutamyl-tRNA(Asn/Gln) amidotransferase subunit B (493 aa).

The protein belongs to the GatB/GatE family. GatB subfamily. In terms of assembly, heterotrimer of A, B and C subunits.

It carries out the reaction L-glutamyl-tRNA(Gln) + L-glutamine + ATP + H2O = L-glutaminyl-tRNA(Gln) + L-glutamate + ADP + phosphate + H(+). The enzyme catalyses L-aspartyl-tRNA(Asn) + L-glutamine + ATP + H2O = L-asparaginyl-tRNA(Asn) + L-glutamate + ADP + phosphate + 2 H(+). Functionally, allows the formation of correctly charged Asn-tRNA(Asn) or Gln-tRNA(Gln) through the transamidation of misacylated Asp-tRNA(Asn) or Glu-tRNA(Gln) in organisms which lack either or both of asparaginyl-tRNA or glutaminyl-tRNA synthetases. The reaction takes place in the presence of glutamine and ATP through an activated phospho-Asp-tRNA(Asn) or phospho-Glu-tRNA(Gln). This is Aspartyl/glutamyl-tRNA(Asn/Gln) amidotransferase subunit B from Aromatoleum aromaticum (strain DSM 19018 / LMG 30748 / EbN1) (Azoarcus sp. (strain EbN1)).